A 181-amino-acid chain; its full sequence is MTTNTIAQIQASIKSIPDYPKPGILFRDVTSLLEDAQAYQATIQLLVDKYKDMGFTKVVGTEARGFLFGAPLALQLGVGFVPVRKPGKLPRNTIAQSYELEYGVDTLEIHTDAIVEGDKVLVVDDLLATGGTIEATTKLIRQLGGVVEHAAFVINLPEIGGDKRLEGLGLNVYSICEFEGH.

It belongs to the purine/pyrimidine phosphoribosyltransferase family. Homodimer.

It is found in the cytoplasm. It catalyses the reaction AMP + diphosphate = 5-phospho-alpha-D-ribose 1-diphosphate + adenine. It participates in purine metabolism; AMP biosynthesis via salvage pathway; AMP from adenine: step 1/1. Functionally, catalyzes a salvage reaction resulting in the formation of AMP, that is energically less costly than de novo synthesis. In Vibrio vulnificus (strain CMCP6), this protein is Adenine phosphoribosyltransferase.